A 530-amino-acid polypeptide reads, in one-letter code: Glucose-6-phosphate isomerase (530 aa).

E347 (proton donor) is an active-site residue. Catalysis depends on residues H378 and K493.

This sequence belongs to the GPI family.

It localises to the cytoplasm. It carries out the reaction alpha-D-glucose 6-phosphate = beta-D-fructose 6-phosphate. It participates in carbohydrate biosynthesis; gluconeogenesis. The protein operates within carbohydrate degradation; glycolysis; D-glyceraldehyde 3-phosphate and glycerone phosphate from D-glucose: step 2/4. Its function is as follows. Catalyzes the reversible isomerization of glucose-6-phosphate to fructose-6-phosphate. In Chlamydia abortus (strain DSM 27085 / S26/3) (Chlamydophila abortus), this protein is Glucose-6-phosphate isomerase.